Consider the following 563-residue polypeptide: Light-independent protochlorophyllide reductase subunit B (563 aa).

Aspartate 36 serves as a coordination point for [4Fe-4S] cluster. The active-site Proton donor is aspartate 293. 437 to 438 serves as a coordination point for substrate; sequence GM. The tract at residues 459–478 is disordered; the sequence is ERREAEFGNQKVETGEPGTG.

This sequence belongs to the ChlB/BchB/BchZ family. As to quaternary structure, protochlorophyllide reductase is composed of three subunits; BchL, BchN and BchB. Forms a heterotetramer of two BchB and two BchN subunits. [4Fe-4S] cluster serves as cofactor.

It carries out the reaction chlorophyllide a + oxidized 2[4Fe-4S]-[ferredoxin] + 2 ADP + 2 phosphate = protochlorophyllide a + reduced 2[4Fe-4S]-[ferredoxin] + 2 ATP + 2 H2O. The protein operates within porphyrin-containing compound metabolism; bacteriochlorophyll biosynthesis (light-independent). In terms of biological role, component of the dark-operative protochlorophyllide reductase (DPOR) that uses Mg-ATP and reduced ferredoxin to reduce ring D of protochlorophyllide (Pchlide) to form chlorophyllide a (Chlide). This reaction is light-independent. The NB-protein (BchN-BchB) is the catalytic component of the complex. This chain is Light-independent protochlorophyllide reductase subunit B, found in Roseiflexus castenholzii (strain DSM 13941 / HLO8).